A 129-amino-acid chain; its full sequence is uncharacterized protein (129 aa).

This sequence belongs to the asfivirus C129R family.

The protein resides in the virion. Plays a role in the inhibition of type I interferon signaling pathway. Mechanistically, specifically interacts with 2',3'-cGAMP and cleaves it via its phosphodiesterase activity. In turn, prevents 2',3'-cGAMP interaction with host ER-resident STING1 leading to inhibition of downstream signaling pathway and type I interferon production. This is an uncharacterized protein from Ornithodoros (relapsing fever ticks).